We begin with the raw amino-acid sequence, 831 residues long: Probable DNA-directed RNA polymerase (831 aa).

Active-site residues include Asp490, Lys560, and Asp738.

It belongs to the phage and mitochondrial RNA polymerase family.

The protein resides in the mitochondrion. The catalysed reaction is RNA(n) + a ribonucleoside 5'-triphosphate = RNA(n+1) + diphosphate. DNA-dependent RNA polymerase catalyzes the transcription of DNA into RNA using the four ribonucleoside triphosphates as substrates. This chain is Probable DNA-directed RNA polymerase, found in Gelasinospora sp. (strain G114).